The primary structure comprises 257 residues: Small ribosomal subunit protein uS2 (257 aa).

The disordered stretch occupies residues 237 to 257 (MDEADGSEAEPEDPAAPESAE). The span at 240–257 (ADGSEAEPEDPAAPESAE) shows a compositional bias: acidic residues.

Belongs to the universal ribosomal protein uS2 family.

This Chlorobium phaeovibrioides (strain DSM 265 / 1930) (Prosthecochloris vibrioformis (strain DSM 265)) protein is Small ribosomal subunit protein uS2.